Reading from the N-terminus, the 298-residue chain is tRNA pseudouridine synthase B (298 aa).

The active-site Nucleophile is the aspartate 39.

Belongs to the pseudouridine synthase TruB family. Type 1 subfamily.

The catalysed reaction is uridine(55) in tRNA = pseudouridine(55) in tRNA. In terms of biological role, responsible for synthesis of pseudouridine from uracil-55 in the psi GC loop of transfer RNAs. This is tRNA pseudouridine synthase B from Oenococcus oeni (strain ATCC BAA-331 / PSU-1).